A 205-amino-acid polypeptide reads, in one-letter code: Transcription antitermination protein NusB (205 aa).

It belongs to the NusB family.

Its function is as follows. Involved in transcription antitermination. Required for transcription of ribosomal RNA (rRNA) genes. Binds specifically to the boxA antiterminator sequence of the ribosomal RNA (rrn) operons. This chain is Transcription antitermination protein NusB, found in Acaryochloris marina (strain MBIC 11017).